The primary structure comprises 309 residues: Jacalin-related lectin 25 (309 aa).

Positions 8 to 190 (MFKVGPIGSQ…LTSIGIYVCP (183 aa)) constitute a Jacalin-type lectin domain.

This sequence belongs to the jacalin lectin family.

The polypeptide is Jacalin-related lectin 25 (JAL25) (Arabidopsis thaliana (Mouse-ear cress)).